The primary structure comprises 205 residues: Small ribosomal subunit protein uS4 (205 aa).

In terms of domain architecture, S4 RNA-binding spans 94–157 (SRLDTVVYRM…KQIPLIQESV (64 aa)).

Belongs to the universal ribosomal protein uS4 family. In terms of assembly, part of the 30S ribosomal subunit. Contacts protein S5. The interaction surface between S4 and S5 is involved in control of translational fidelity.

In terms of biological role, one of the primary rRNA binding proteins, it binds directly to 16S rRNA where it nucleates assembly of the body of the 30S subunit. With S5 and S12 plays an important role in translational accuracy. The protein is Small ribosomal subunit protein uS4 of Rickettsia conorii (strain ATCC VR-613 / Malish 7).